A 223-amino-acid polypeptide reads, in one-letter code: Deoxyribose-phosphate aldolase (223 aa).

D91 serves as the catalytic Proton donor/acceptor. Catalysis depends on K154, which acts as the Schiff-base intermediate with acetaldehyde. Residue K183 is the Proton donor/acceptor of the active site.

This sequence belongs to the DeoC/FbaB aldolase family. DeoC type 1 subfamily.

The protein localises to the cytoplasm. The catalysed reaction is 2-deoxy-D-ribose 5-phosphate = D-glyceraldehyde 3-phosphate + acetaldehyde. The protein operates within carbohydrate degradation; 2-deoxy-D-ribose 1-phosphate degradation; D-glyceraldehyde 3-phosphate and acetaldehyde from 2-deoxy-alpha-D-ribose 1-phosphate: step 2/2. Its function is as follows. Catalyzes a reversible aldol reaction between acetaldehyde and D-glyceraldehyde 3-phosphate to generate 2-deoxy-D-ribose 5-phosphate. In Geobacillus thermodenitrificans (strain NG80-2), this protein is Deoxyribose-phosphate aldolase.